A 114-amino-acid chain; its full sequence is Putative small ubiquitin-related modifier 4 (114 aa).

The disordered stretch occupies residues 1 to 20; sequence MSTTSRVGSNEVKMEGQKRK. Residues 26–104 form the Ubiquitin-like domain; the sequence is THVTLKVKGQ…IDAMLCQQSG (79 aa). G104 is covalently cross-linked (Glycyl lysine isopeptide (Gly-Lys) (interchain with K-? in acceptor proteins)).

Belongs to the ubiquitin family. SUMO subfamily. Interacts with SAE2, SCE1, SIZ1 and MMS21 Covalently attached to a number of proteins.

Its subcellular location is the nucleus. The protein localises to the cytoplasm. Its function is as follows. Ubiquitin-like protein which can be covalently attached to target lysines as a monomer. Does not seem to be involved in protein degradation and may function as an antagonist of ubiquitin in the degradation process. The protein is Putative small ubiquitin-related modifier 4 (SUMO4) of Arabidopsis thaliana (Mouse-ear cress).